The chain runs to 192 residues: A-type ATP synthase subunit E (192 aa).

The protein belongs to the V-ATPase E subunit family. In terms of assembly, has multiple subunits with at least A(3), B(3), C, D, E, F, H, I and proteolipid K(x).

The protein localises to the cell membrane. In terms of biological role, component of the A-type ATP synthase that produces ATP from ADP in the presence of a proton gradient across the membrane. In Metallosphaera sedula (strain ATCC 51363 / DSM 5348 / JCM 9185 / NBRC 15509 / TH2), this protein is A-type ATP synthase subunit E.